The sequence spans 222 residues: MPKTMHFLFRFIVFFYLWGLFTAQRQKKEESTEEVKIEVLHRPENCSKTSKKGDLLNAHYDGYLAKDGSKFYCSRTQNEGHPKWFVLGVGQVIKGLDIAMTDMCPGEKRKVVIPPSFAYGKEGYAEGKIPPDATLIFEIELYAVTKGPRSIETFKQIDMDNDRQLSKAEINLYLQREFEKDEKPRDKSYQDAVLEDIFKKNDHDGDGFISPKEYNVYQHDEL.

Residues 1–23 (MPKTMHFLFRFIVFFYLWGLFTA) form the signal peptide. N45 is a glycosylation site (N-linked (GlcNAc...) asparagine). Residues 53–145 (GDLLNAHYDG…IFEIELYAVT (93 aa)) enclose the PPIase FKBP-type domain. 2 EF-hand domains span residues 145 to 180 (TKGP…EFEK) and 189 to 222 (YQDA…HDEL). Residues D158, D160, D162, Q164, E169, D202, D204, D206, and E213 each contribute to the Ca(2+) site. Residues 200-222 (KNDHDGDGFISPKEYNVYQHDEL) form a disordered region. The short motif at 219 to 222 (HDEL) is the Retention in the endoplasmic reticulum element.

Post-translationally, glycosylated.

The protein resides in the endoplasmic reticulum lumen. The catalysed reaction is [protein]-peptidylproline (omega=180) = [protein]-peptidylproline (omega=0). Its function is as follows. PPIases accelerate the folding of proteins during protein synthesis. The sequence is that of Peptidyl-prolyl cis-trans isomerase FKBP7 (FKBP7) from Homo sapiens (Human).